A 351-amino-acid polypeptide reads, in one-letter code: Photosystem II D2 protein (351 aa).

The helical transmembrane segment at 39-59 threads the bilayer; the sequence is CSYLALGAWFTGTTFVTSWYT. Position 116 (H116) interacts with chlorophyll a. A helical transmembrane segment spans residues 123–139; sequence GFCLRQFEIARLVGIRP. Positions 128 and 141 each coordinate pheophytin a. The chain crosses the membrane as a helical span at residues 151-164; that stretch reads VFVSVFLIYPLGQA. H196 serves as a coordination point for chlorophyll a. The chain crosses the membrane as a helical span at residues 206-226; the sequence is GALLCAIHGATVENTLFEDGE. Positions 213 and 260 each coordinate a plastoquinone. Position 213 (H213) interacts with Fe cation. Residue H267 participates in Fe cation binding. Residues 277-293 form a helical membrane-spanning segment; sequence GLWTSSIGIIGLALNLR.

It belongs to the reaction center PufL/M/PsbA/D family. In terms of assembly, PSII is composed of 1 copy each of membrane proteins PsbA, PsbB, PsbC, PsbD, PsbE, PsbF, PsbH, PsbI, PsbJ, PsbK, PsbL, PsbM, PsbT, PsbY, PsbZ, Psb30/Ycf12, at least 3 peripheral proteins of the oxygen-evolving complex and a large number of cofactors. It forms dimeric complexes. It depends on The D1/D2 heterodimer binds P680, chlorophylls that are the primary electron donor of PSII, and subsequent electron acceptors. It shares a non-heme iron and each subunit binds pheophytin, quinone, additional chlorophylls, carotenoids and lipids. There is also a Cl(-1) ion associated with D1 and D2, which is required for oxygen evolution. The PSII complex binds additional chlorophylls, carotenoids and specific lipids. as a cofactor.

It is found in the plastid. It localises to the chloroplast thylakoid membrane. It carries out the reaction 2 a plastoquinone + 4 hnu + 2 H2O = 2 a plastoquinol + O2. Photosystem II (PSII) is a light-driven water:plastoquinone oxidoreductase that uses light energy to abstract electrons from H(2)O, generating O(2) and a proton gradient subsequently used for ATP formation. It consists of a core antenna complex that captures photons, and an electron transfer chain that converts photonic excitation into a charge separation. The D1/D2 (PsbA/PsbD) reaction center heterodimer binds P680, the primary electron donor of PSII as well as several subsequent electron acceptors. D2 is needed for assembly of a stable PSII complex. The protein is Photosystem II D2 protein of Galdieria sulphuraria (Red alga).